The chain runs to 179 residues: Low molecular weight phosphotyrosine protein phosphatase (179 aa).

The active-site Nucleophile is Cys15. Arg21 is a catalytic residue. Catalysis depends on Asp148, which acts as the Proton donor.

Belongs to the low molecular weight phosphotyrosine protein phosphatase family.

The protein resides in the cytoplasm. It carries out the reaction O-phospho-L-tyrosyl-[protein] + H2O = L-tyrosyl-[protein] + phosphate. The enzyme catalyses a phosphate monoester + H2O = an alcohol + phosphate. Functionally, acts on tyrosine phosphorylated proteins, low-MW aryl phosphates and natural and synthetic acyl phosphates. The protein is Low molecular weight phosphotyrosine protein phosphatase (acp1) of Dictyostelium discoideum (Social amoeba).